We begin with the raw amino-acid sequence, 295 residues long: uncharacterized protein (295 aa).

The first 19 residues, 1 to 19 (MRKLLLIITVFFTFNVAQA), serve as a signal peptide directing secretion.

This is an uncharacterized protein from Rickettsia conorii (strain ATCC VR-613 / Malish 7).